The primary structure comprises 313 residues: Ribosomal RNA small subunit methyltransferase H (313 aa).

S-adenosyl-L-methionine-binding positions include 35–37 (GGH), Asp-55, Phe-79, Asp-100, and Gln-107.

Belongs to the methyltransferase superfamily. RsmH family.

It localises to the cytoplasm. It catalyses the reaction cytidine(1402) in 16S rRNA + S-adenosyl-L-methionine = N(4)-methylcytidine(1402) in 16S rRNA + S-adenosyl-L-homocysteine + H(+). In terms of biological role, specifically methylates the N4 position of cytidine in position 1402 (C1402) of 16S rRNA. In Burkholderia ambifaria (strain ATCC BAA-244 / DSM 16087 / CCUG 44356 / LMG 19182 / AMMD) (Burkholderia cepacia (strain AMMD)), this protein is Ribosomal RNA small subunit methyltransferase H.